Here is a 198-residue protein sequence, read N- to C-terminus: Protein GrpE (198 aa).

This sequence belongs to the GrpE family. In terms of assembly, homodimer.

It is found in the cytoplasm. In terms of biological role, participates actively in the response to hyperosmotic and heat shock by preventing the aggregation of stress-denatured proteins, in association with DnaK and GrpE. It is the nucleotide exchange factor for DnaK and may function as a thermosensor. Unfolded proteins bind initially to DnaJ; upon interaction with the DnaJ-bound protein, DnaK hydrolyzes its bound ATP, resulting in the formation of a stable complex. GrpE releases ADP from DnaK; ATP binding to DnaK triggers the release of the substrate protein, thus completing the reaction cycle. Several rounds of ATP-dependent interactions between DnaJ, DnaK and GrpE are required for fully efficient folding. The sequence is that of Protein GrpE from Actinobacillus pleuropneumoniae serotype 3 (strain JL03).